Here is a 264-residue protein sequence, read N- to C-terminus: Thymidylate synthase (264 aa).

Residues R21 and 126-127 (RR) contribute to the dUMP site. C146 functions as the Nucleophile in the catalytic mechanism. Residues 166–169 (RSAD), N177, and 207–209 (HLY) contribute to the dUMP site. Position 169 (D169) interacts with (6R)-5,10-methylene-5,6,7,8-tetrahydrofolate. A263 contacts (6R)-5,10-methylene-5,6,7,8-tetrahydrofolate.

This sequence belongs to the thymidylate synthase family. Bacterial-type ThyA subfamily. As to quaternary structure, homodimer.

It is found in the cytoplasm. It catalyses the reaction dUMP + (6R)-5,10-methylene-5,6,7,8-tetrahydrofolate = 7,8-dihydrofolate + dTMP. The protein operates within pyrimidine metabolism; dTTP biosynthesis. Functionally, catalyzes the reductive methylation of 2'-deoxyuridine-5'-monophosphate (dUMP) to 2'-deoxythymidine-5'-monophosphate (dTMP) while utilizing 5,10-methylenetetrahydrofolate (mTHF) as the methyl donor and reductant in the reaction, yielding dihydrofolate (DHF) as a by-product. This enzymatic reaction provides an intracellular de novo source of dTMP, an essential precursor for DNA biosynthesis. This chain is Thymidylate synthase, found in Rhodopseudomonas palustris (strain ATCC BAA-98 / CGA009).